A 704-amino-acid polypeptide reads, in one-letter code: Preterpestacin I synthase tpcA (704 aa).

A terpene cyclase region spans residues 1 to 329; it reads MEQLSYQSKL…CSACPRQNAW (329 aa). Aspartate 96 is a Mg(2+) binding site. Residues aspartate 96, asparagine 231, 235–239, and 325–326 each bind substrate; these read SWERE and RQ. Positions 96-100 match the DDXXD 1 motif; it reads DDGGE. Positions 231–239 match the NSE/DTE motif; the sequence is NDYFSWERE. The prenyltransferase stretch occupies residues 330-688; the sequence is KDMSSQSLNG…MLRLCLAKLS (359 aa). The segment at 361–380 is disordered; it reads KDSSFFGSQPSDDEPSLSEV. Isopentenyl diphosphate contacts are provided by lysine 406, arginine 409, and histidine 438. Residues aspartate 445 and aspartate 449 each contribute to the Mg(2+) site. Positions 445 to 449 match the DDXXD 2 motif; the sequence is DDLED. Arginine 454 is a binding site for dimethylallyl diphosphate. Arginine 455 provides a ligand contact to isopentenyl diphosphate. Residues lysine 532, threonine 533, glutamine 568, asparagine 575, lysine 583, and lysine 593 each contribute to the dimethylallyl diphosphate site.

This sequence in the N-terminal section; belongs to the terpene synthase family. It in the C-terminal section; belongs to the FPP/GGPP synthase family. Hexamer. It depends on Mg(2+) as a cofactor.

The enzyme catalyses isopentenyl diphosphate + (2E,6E)-farnesyl diphosphate = (2E,6E,10E)-geranylgeranyl diphosphate + diphosphate. It carries out the reaction isopentenyl diphosphate + (2E,6E,10E)-geranylgeranyl diphosphate = (2E,6E,10E,14E)-geranylfarnesyl diphosphate + diphosphate. Its pathway is secondary metabolite biosynthesis; terpenoid biosynthesis. Its function is as follows. Bifunctional terpene synthase; part of the gene cluster that mediates the biosynthesis of terpestacin. The bifunctional terpene synthase tpcA converts isopentenyl diphosphate (IPP) and dimethylallyl diphosphate (DMAPP) into the sesterterpene preterpestacin I. The C-terminal prenyltransferase (PT) domain of tpcA catalyzes formation of GFPP, whereas the N-terminal terpene cyclase (TC) domain catalyzes the cyclization of GFPP into preterpestacin I. The cytochrome P450 monooxygenase tpcB then hydroxylates preterpestacin I to yield 24-hydroxypreterpstacin I (renamed as preterpestacin II) whereas the cytochrome P450 monooxygenase tpcC further hydroxylates preterpestacin II to yield 16,17-dihydroxypreterpestacin II (renamed as preterpestacin III). Finally, the FAD-dependent monooxygenase tpcD converts preterpestacin III into terpestacin. The sequence is that of Preterpestacin I synthase tpcA from Cochliobolus heterostrophus (strain C5 / ATCC 48332 / race O) (Southern corn leaf blight fungus).